A 374-amino-acid chain; its full sequence is Glutamate 5-kinase (374 aa).

ATP is bound at residue lysine 9. The substrate site is built by serine 49, aspartate 136, and asparagine 148. ATP-binding positions include 168–169 and 210–216; these read TD and TGGMRSK. The PUA domain occupies 276–354; the sequence is AGMITVDSGA…EEARQYSYLH (79 aa).

The protein belongs to the glutamate 5-kinase family.

It is found in the cytoplasm. The catalysed reaction is L-glutamate + ATP = L-glutamyl 5-phosphate + ADP. Its pathway is amino-acid biosynthesis; L-proline biosynthesis; L-glutamate 5-semialdehyde from L-glutamate: step 1/2. Its function is as follows. Catalyzes the transfer of a phosphate group to glutamate to form L-glutamate 5-phosphate. This Geobacillus kaustophilus (strain HTA426) protein is Glutamate 5-kinase.